Reading from the N-terminus, the 577-residue chain is Alpha-1,2-mannosyltransferase alg9 (577 aa).

Positions 1 to 29 are cleaved as a signal peptide; the sequence is MPSKAPRKSLSVSFVWTFSILAVLRLTSA. The Extracellular segment spans residues 30–68; sequence SFRVIDDCDEVYNYWEPLHYLLYGYGLQTWEYSPEYAIR. The chain crosses the membrane as a helical span at residues 69–89; that stretch reads SWFYIALHAVPGFLARGLGLS. The Cytoplasmic portion of the chain corresponds to 90–95; the sequence is RLHVFY. A helical membrane pass occupies residues 96–116; that stretch reads FIRGVLACFSAFCETNLILAV. Topologically, residues 117-136 are extracellular; the sequence is ARNFNRAVALHLTSVLFVNS. Residues 137–159 traverse the membrane as a helical segment; sequence GMWSASTSFLPSSFAMNMVTLAL. Residues 160-176 lie on the Cytoplasmic side of the membrane; that stretch reads SAQLSPPSTKRTVKVVS. The chain crosses the membrane as a helical span at residues 177–197; sequence FITIGAVIGWPFSAALSIPFI. Topologically, residues 198-217 are extracellular; the sequence is LLELVDLKGRFRHLFCRWFK. The helical transmembrane segment at 218 to 238 threads the bilayer; that stretch reads AIFVALLITGICITVDSLFYH. The Cytoplasmic portion of the chain corresponds to 239-280; the sequence is RIQFVAWNIVKYNVLAKDGRGPDIYGTEPWWYYFANLSLQHN. The helical transmembrane segment at 281 to 301 threads the bilayer; the sequence is IVLWFAMACGPLVLLAAFTNW. At 302–305 the chain is on the extracellular side; it reads INLD. A helical membrane pass occupies residues 306-326; sequence SFLDLSSVISPFYIWLFIFII. Residues 327–333 lie on the Cytoplasmic side of the membrane; sequence QPHKEER. A helical transmembrane segment spans residues 334-354; that stretch reads FMYPIYPVLCLAAAIGLDMSL. Over 355–375 the chain is Extracellular; the sequence is KLMIQILSSINETVRSKFPVR. A helical membrane pass occupies residues 376-396; it reads FVVLCVYAIIGCLSIARILAI. The Cytoplasmic segment spans residues 397 to 577; the sequence is QNYNAPMIIY…NLRRASKQQA (181 aa).

The protein belongs to the glycosyltransferase 22 family.

Its subcellular location is the endoplasmic reticulum membrane. The enzyme catalyses an alpha-D-Man-(1-&gt;2)-alpha-D-Man-(1-&gt;2)-alpha-D-Man-(1-&gt;3)-[alpha-D-Man-(1-&gt;3)-alpha-D-Man-(1-&gt;6)]-beta-D-Man-(1-&gt;4)-beta-D-GlcNAc-(1-&gt;4)-alpha-D-GlcNAc-diphospho-di-trans,poly-cis-dolichol + a di-trans,poly-cis-dolichyl beta-D-mannosyl phosphate = an alpha-D-Man-(1-&gt;2)-alpha-D-Man-(1-&gt;2)-alpha-D-Man-(1-&gt;3)-[alpha-D-Man-(1-&gt;2)-alpha-D-Man-(1-&gt;3)-alpha-D-Man-(1-&gt;6)]-beta-D-Man-(1-&gt;4)-beta-D-GlcNAc-(1-&gt;4)-alpha-D-GlcNAc-diphospho-di-trans,poly-cis-dolichol + a di-trans,poly-cis-dolichyl phosphate + H(+). It carries out the reaction an alpha-D-Man-(1-&gt;2)-alpha-D-Man-(1-&gt;2)-alpha-D-Man-(1-&gt;3)-[alpha-D-Man-(1-&gt;2)-alpha-D-Man-(1-&gt;3)-[alpha-D-Man-(1-&gt;6)]-alpha-D-Man-(1-&gt;6)]-beta-D-Man-(1-&gt;4)-beta-D-GlcNAc-(1-&gt;4)-alpha-D-GlcNAc-diphospho-di-trans,poly-cis-dolichol + a di-trans,poly-cis-dolichyl beta-D-mannosyl phosphate = an alpha-D-Man-(1-&gt;2)-alpha-D-Man-(1-&gt;2)-alpha-D-Man-(1-&gt;3)-[alpha-D-Man-(1-&gt;2)-alpha-D-Man-(1-&gt;3)-[alpha-D-Man-(1-&gt;2)-alpha-D-Man-(1-&gt;6)]-alpha-D-Man-(1-&gt;6)]-beta-D-Man-(1-&gt;4)-beta-D-GlcNAc-(1-&gt;4)-alpha-D-GlcNAc-diphospho-di-trans,poly-cis-dolichol + a di-trans,poly-cis-dolichyl phosphate + H(+). It functions in the pathway protein modification; protein glycosylation. Catalyzes the transfer of mannose from Dol-P-Man to lipid-linked oligosaccharides. In Schizosaccharomyces pombe (strain 972 / ATCC 24843) (Fission yeast), this protein is Alpha-1,2-mannosyltransferase alg9 (alg9).